Reading from the N-terminus, the 237-residue chain is Lycopene beta-cyclase (237 aa).

7 helical membrane passes run 3–23, 38–58, 80–100, 113–133, 137–157, 170–192, and 213–233; these read TSYLTFLAVAVGPPLVALGVV, VGILLALALSYTTPWDNYLIA, EYLFVITQTLLTGLWVQALPL, AVLGALAGVLVGCGGAVLLTV, FYIGAIIAWAAPVLALQWAVG, AAVLVPTLFLSAADRYAIADGIW, and AFFFVTNVFVSQGLILYAWVL.

Belongs to the lycopene beta-cyclase family.

The protein resides in the cell membrane. The catalysed reaction is a carotenoid psi-end group = a carotenoid beta-end derivative. It catalyses the reaction all-trans-lycopene = gamma-carotene. The enzyme catalyses gamma-carotene = all-trans-beta-carotene. The protein operates within carotenoid biosynthesis; beta-carotene biosynthesis. In terms of biological role, catalyzes the cyclization of both ends of lycopene to form beta-carotene, a retinal precursor. Is required for bacteriorhodopsin biogenesis, a light-driven proton pump with a covalently bound retinal cofactor. In Halobacterium salinarum (strain ATCC 29341 / DSM 671 / R1), this protein is Lycopene beta-cyclase.